A 308-amino-acid chain; its full sequence is Vacuolar lysine transporter YPQ1 (308 aa).

Topologically, residues 1-12 (MQLVPLELNRST) are vacuolar. Residue asparagine 9 is glycosylated (N-linked (GlcNAc...) asparagine). Positions 10 to 76 (RSTLSGISGS…QHLLSTMIIL (67 aa)) constitute a PQ-loop 1 domain. Residues 13 to 33 (LSGISGSISISCWIIVFVPQI) traverse the membrane as a helical segment. Residues 34–44 (YENFYRKSSDG) lie on the Cytoplasmic side of the membrane. The chain crosses the membrane as a helical span at residues 45–65 (LSLLFVVLWLAGDVFNLMGAV). The Vacuolar segment spans residues 66–68 (MQH). The helical transmembrane segment at 69–89 (LLSTMIILAAYYTVADIILLG) threads the bilayer. Over 90 to 167 (QCLWYDNEEK…EVNSRNLIKD (78 aa)) the chain is Cytoplasmic. Residues 168 to 188 (IFIVSGVVFVGFISWYVTYCV) traverse the membrane as a helical segment. Asparagine 189 carries an N-linked (GlcNAc...) asparagine glycan. Residues 189-205 (NYTQPPPVEDPSLPVPE) are Vacuolar-facing. A helical transmembrane segment spans residues 206–226 (LQINWMAQIFGYLSALLYLGS). In terms of domain architecture, PQ-loop 2 spans 211-274 (MAQIFGYLSA…ISLDWKYLIM (64 aa)). The Cytoplasmic segment spans residues 227–244 (RIPQILLNFKRKSCEGIS). A helical transmembrane segment spans residues 245-265 (FLFFLFACLGNTTFIFSVIVI). Over 266–277 (SLDWKYLIMNAS) the chain is Vacuolar. Asparagine 275 carries an N-linked (GlcNAc...) asparagine glycan. Residues 278–298 (WLVGSIGTLFMDFVIFSQFFI) form a helical membrane-spanning segment. Residues 299 to 308 (YKRNKKFILN) are Cytoplasmic-facing.

Belongs to the laat-1 family.

The protein localises to the vacuole membrane. Amino acid transporter that moves lysine into the vacuole. May also contribute to low affinity arginine import into the vacuole. Has also been suggested to mediate export of cationic amino acids from the vacuole. May function as an amino acid/proton antiporter. The sequence is that of Vacuolar lysine transporter YPQ1 (YPQ1) from Saccharomyces cerevisiae (strain ATCC 204508 / S288c) (Baker's yeast).